We begin with the raw amino-acid sequence, 20 residues long: 7.2 kDa cytotoxin RVV-7 (20 aa).

Monomer. Homodimerizes during storage at 30 degrees Celsius (observed after 3 days). In terms of tissue distribution, expressed by the venom gland.

It localises to the secreted. The protein resides in the target cell membrane. Functionally, this three-finger cytotoxin shows cytotoxicity and direct nephrotoxicity. The cytotoxicity has been observed on B16F10 melanoma cells (EC(50)=2.56 uM) and on kidney proximal tubular epithelium LLCPK1 cells (EC(50)=4.79 uM); it is due to necrotic cell death and not to apoptosis. Direct nephrotoxicity has been deduced from binding to LLCPK1 cell line and to kidney membranes. In addition, after intravenous injection into mice tail vein, the toxin principally accumulates in kidney, but only minimally in blood, liver and brain. This chain is 7.2 kDa cytotoxin RVV-7, found in Daboia russelii (Russel's viper).